Here is a 30-residue protein sequence, read N- to C-terminus: Trypsin inhibitor 4 (30 aa).

Disulfide bonds link Cys3/Cys20, Cys10/Cys22, and Cys16/Cys28.

Belongs to the protease inhibitor I7 (squash-type serine protease inhibitor) family.

The protein resides in the secreted. In terms of biological role, inhibits trypsin; probably participates in a plant defense mechanism. This Momordica charantia (Bitter gourd) protein is Trypsin inhibitor 4.